A 500-amino-acid polypeptide reads, in one-letter code: Glycerol kinase (500 aa).

Thr11 provides a ligand contact to ADP. ATP-binding residues include Thr11, Thr12, and Ser13. Thr11 is a binding site for sn-glycerol 3-phosphate. Position 15 (Arg15) interacts with ADP. 4 residues coordinate sn-glycerol 3-phosphate: Arg81, Glu82, Tyr133, and Asp242. 5 residues coordinate glycerol: Arg81, Glu82, Tyr133, Asp242, and Gln243. Positions 264 and 307 each coordinate ADP. ATP-binding residues include Thr264, Gly307, Gln311, and Gly411. Residue Gly411 coordinates ADP.

It belongs to the FGGY kinase family.

The enzyme catalyses glycerol + ATP = sn-glycerol 3-phosphate + ADP + H(+). Its pathway is polyol metabolism; glycerol degradation via glycerol kinase pathway; sn-glycerol 3-phosphate from glycerol: step 1/1. Inhibited by fructose 1,6-bisphosphate (FBP). Key enzyme in the regulation of glycerol uptake and metabolism. Catalyzes the phosphorylation of glycerol to yield sn-glycerol 3-phosphate. This is Glycerol kinase from Bradyrhizobium sp. (strain BTAi1 / ATCC BAA-1182).